A 1054-amino-acid chain; its full sequence is Cell wall acid trehalase ARB_03719 (1054 aa).

An N-terminal signal peptide occupies residues 1–24 (MKQPNINLAACILWLLSIITAVAA). N-linked (GlcNAc...) asparagine glycans are attached at residues Asn138, Asn178, Asn183, Asn207, Asn239, Asn277, and Asn309. 450–451 (WD) contributes to the substrate binding site. N-linked (GlcNAc...) asparagine glycans are attached at residues Asn495, Asn515, Asn572, and Asn580. Glu586 (proton donor) is an active-site residue. N-linked (GlcNAc...) asparagine glycosylation is found at Asn620 and Asn648. A substrate-binding site is contributed by 654–655 (KQ). N-linked (GlcNAc...) asparagine glycans are attached at residues Asn808 and Asn844. A disordered region spans residues 950–974 (PLHPVTDPENGDASGSSPTTPASSV). The segment covering 962–974 (ASGSSPTTPASSV) has biased composition (low complexity). N-linked (GlcNAc...) asparagine glycans are attached at residues Asn1004, Asn1007, and Asn1039.

It belongs to the glycosyl hydrolase 65 family.

Its subcellular location is the secreted. It is found in the cell wall. It catalyses the reaction alpha,alpha-trehalose + H2O = alpha-D-glucose + beta-D-glucose. Functionally, cell wall acid trehalase that catalyzes hydrolysis of the disaccharide trehalose and required for growth on trehalose as carbon source. Plays a role in virulence. This chain is Cell wall acid trehalase ARB_03719, found in Arthroderma benhamiae (strain ATCC MYA-4681 / CBS 112371) (Trichophyton mentagrophytes).